We begin with the raw amino-acid sequence, 294 residues long: ATP synthase gamma chain (294 aa).

Belongs to the ATPase gamma chain family. In terms of assembly, F-type ATPases have 2 components, CF(1) - the catalytic core - and CF(0) - the membrane proton channel. CF(1) has five subunits: alpha(3), beta(3), gamma(1), delta(1), epsilon(1). CF(0) has three main subunits: a, b and c.

It is found in the cell inner membrane. Produces ATP from ADP in the presence of a proton gradient across the membrane. The gamma chain is believed to be important in regulating ATPase activity and the flow of protons through the CF(0) complex. The sequence is that of ATP synthase gamma chain from Campylobacter jejuni (strain RM1221).